Reading from the N-terminus, the 759-residue chain is 5-methyltetrahydropteroyltriglutamate--homocysteine methyltransferase (759 aa).

Polar residues predominate over residues 1–16; it reads MTQPVRRQPFTATITG. The interval 1-22 is disordered; it reads MTQPVRRQPFTATITGSPRIGP. Residues 24 to 27 and Lys-118 each bind 5-methyltetrahydropteroyltri-L-glutamate; that span reads RELK. L-homocysteine is bound by residues 437–439 and Glu-490; that span reads IGS. Residues 437 to 439 and Glu-490 contribute to the L-methionine site; that span reads IGS. 5-methyltetrahydropteroyltri-L-glutamate is bound by residues 521–522 and Trp-567; that span reads RC. Residue Asp-605 participates in L-homocysteine binding. Asp-605 is an L-methionine binding site. Glu-611 contacts 5-methyltetrahydropteroyltri-L-glutamate. Positions 647, 649, and 671 each coordinate Zn(2+). His-700 (proton donor) is an active-site residue. Cys-732 is a Zn(2+) binding site.

Belongs to the vitamin-B12 independent methionine synthase family. The cofactor is Zn(2+).

The enzyme catalyses 5-methyltetrahydropteroyltri-L-glutamate + L-homocysteine = tetrahydropteroyltri-L-glutamate + L-methionine. Its pathway is amino-acid biosynthesis; L-methionine biosynthesis via de novo pathway; L-methionine from L-homocysteine (MetE route): step 1/1. Catalyzes the transfer of a methyl group from 5-methyltetrahydrofolate to homocysteine resulting in methionine formation. This Mycobacterium tuberculosis (strain ATCC 25177 / H37Ra) protein is 5-methyltetrahydropteroyltriglutamate--homocysteine methyltransferase.